A 102-amino-acid polypeptide reads, in one-letter code: Thioredoxin (102 aa).

The Thioredoxin domain maps to 2-102 (LHIDELTFEN…ILIHTINKYL (101 aa)). Residues Cys29 and Cys32 each act as nucleophile in the active site. Cys29 and Cys32 are disulfide-bonded.

Belongs to the thioredoxin family.

It localises to the plastid. The protein resides in the chloroplast. Participates in various redox reactions through the reversible oxidation of its active center dithiol to a disulfide and catalyzes dithiol-disulfide exchange reactions. The chain is Thioredoxin (trxA) from Cyanidioschyzon merolae (strain NIES-3377 / 10D) (Unicellular red alga).